The sequence spans 66 residues: Large ribosomal subunit protein bL33c (66 aa).

This sequence belongs to the bacterial ribosomal protein bL33 family.

It localises to the plastid. This chain is Large ribosomal subunit protein bL33c, found in Cuscuta gronovii (Common dodder).